Reading from the N-terminus, the 208-residue chain is Protein GrpE (208 aa).

Positions 1-25 (MVDNKDFNEELKENIQEELDNETKA) are enriched in basic and acidic residues. The interval 1–38 (MVDNKDFNEELKENIQEELDNETKAENPNIDEEVEEVS) is disordered. The segment covering 29–38 (NIDEEVEEVS) has biased composition (acidic residues).

Belongs to the GrpE family. As to quaternary structure, homodimer.

Its subcellular location is the cytoplasm. Its function is as follows. Participates actively in the response to hyperosmotic and heat shock by preventing the aggregation of stress-denatured proteins, in association with DnaK and GrpE. It is the nucleotide exchange factor for DnaK and may function as a thermosensor. Unfolded proteins bind initially to DnaJ; upon interaction with the DnaJ-bound protein, DnaK hydrolyzes its bound ATP, resulting in the formation of a stable complex. GrpE releases ADP from DnaK; ATP binding to DnaK triggers the release of the substrate protein, thus completing the reaction cycle. Several rounds of ATP-dependent interactions between DnaJ, DnaK and GrpE are required for fully efficient folding. This is Protein GrpE from Clostridium perfringens (strain 13 / Type A).